Here is a 158-residue protein sequence, read N- to C-terminus: 6,7-dimethyl-8-ribityllumazine synthase (158 aa).

Residues Phe24, 58-60 (AFE), and 82-84 (AVI) contribute to the 5-amino-6-(D-ribitylamino)uracil site. 87–88 (GT) is a binding site for (2S)-2-hydroxy-3-oxobutyl phosphate. The active-site Proton donor is the His90. Phe115 is a 5-amino-6-(D-ribitylamino)uracil binding site. Arg129 contributes to the (2S)-2-hydroxy-3-oxobutyl phosphate binding site.

The protein belongs to the DMRL synthase family. Forms an icosahedral capsid composed of 60 subunits, arranged as a dodecamer of pentamers.

The catalysed reaction is (2S)-2-hydroxy-3-oxobutyl phosphate + 5-amino-6-(D-ribitylamino)uracil = 6,7-dimethyl-8-(1-D-ribityl)lumazine + phosphate + 2 H2O + H(+). It functions in the pathway cofactor biosynthesis; riboflavin biosynthesis; riboflavin from 2-hydroxy-3-oxobutyl phosphate and 5-amino-6-(D-ribitylamino)uracil: step 1/2. Catalyzes the formation of 6,7-dimethyl-8-ribityllumazine by condensation of 5-amino-6-(D-ribitylamino)uracil with 3,4-dihydroxy-2-butanone 4-phosphate. This is the penultimate step in the biosynthesis of riboflavin. The sequence is that of 6,7-dimethyl-8-ribityllumazine synthase from Pseudomonas paraeruginosa (strain DSM 24068 / PA7) (Pseudomonas aeruginosa (strain PA7)).